Reading from the N-terminus, the 407-residue chain is Amylovoran biosynthesis glycosyltransferase AmsK (407 aa).

The protein belongs to the glycosyltransferase group 1 family. Glycosyltransferase 4 subfamily.

It functions in the pathway glycan metabolism; exopolysaccharide biosynthesis. In terms of biological role, involved in the biosynthesis of amylovoran which functions as a virulence factor. This Erwinia amylovora (Fire blight bacteria) protein is Amylovoran biosynthesis glycosyltransferase AmsK (amsK).